Here is a 209-residue protein sequence, read N- to C-terminus: Small ribosomal subunit protein uS3 (209 aa).

The KH type-2 domain maps to 38 to 107; the sequence is IRKVIKNKYA…RFIVNVEEIK (70 aa).

It belongs to the universal ribosomal protein uS3 family. In terms of assembly, part of the 30S ribosomal subunit. Forms a tight complex with proteins S10 and S14.

Functionally, binds the lower part of the 30S subunit head. Binds mRNA in the 70S ribosome, positioning it for translation. This Thermosipho africanus (strain TCF52B) protein is Small ribosomal subunit protein uS3.